Here is a 248-residue protein sequence, read N- to C-terminus: Glucosamine-6-phosphate isomerase (248 aa).

The Proton acceptor; for enolization step role is filled by D68. The active-site For ring-opening step is the E137. Residue H139 is the Proton acceptor; for ring-opening step of the active site. The For ring-opening step role is filled by E144.

Belongs to the glucosamine/galactosamine-6-phosphate isomerase family. In terms of assembly, monomer.

The enzyme catalyses alpha-D-glucosamine 6-phosphate + H2O = beta-D-fructose 6-phosphate + NH4(+). The protein is Glucosamine-6-phosphate isomerase (NAG1) of Candida albicans (strain SC5314 / ATCC MYA-2876) (Yeast).